The following is a 37-amino-acid chain: Large ribosomal subunit protein bL36c (37 aa).

Belongs to the bacterial ribosomal protein bL36 family.

Its subcellular location is the plastid. The protein localises to the chloroplast. This chain is Large ribosomal subunit protein bL36c, found in Pelargonium hortorum (Common geranium).